We begin with the raw amino-acid sequence, 385 residues long: Protein pelota homolog (385 aa).

Lys162 is covalently cross-linked (Glycyl lysine isopeptide (Lys-Gly) (interchain with G-Cter in SUMO2)). Residues Ser374, Ser380, Ser381, and Ser382 each carry the phosphoserine modification.

Belongs to the eukaryotic release factor 1 family. Pelota subfamily. As to quaternary structure, component of the Pelota-HBS1L complex, also named Dom34-Hbs1 complex, composed of PELO and HBS1L. Interacts with PINK1. Interacts with ABCE1. Interacts with CNOT4. It depends on a divalent metal cation as a cofactor.

It localises to the cytoplasm. In terms of biological role, component of the Pelota-HBS1L complex, a complex that recognizes stalled ribosomes and triggers the No-Go Decay (NGD) pathway. In the Pelota-HBS1L complex, PELO recognizes ribosomes stalled at the 3' end of an mRNA and engages stalled ribosomes by destabilizing mRNA in the mRNA channel. Following mRNA extraction from stalled ribosomes by the SKI complex, the Pelota-HBS1L complex promotes recruitment of ABCE1, which drives the disassembly of stalled ribosomes, followed by degradation of damaged mRNAs as part of the NGD pathway. As part of the PINK1-regulated signaling, upon mitochondrial damage is recruited to the ribosome/mRNA-ribonucleoprotein complex associated to mitochondrial outer membrane thereby enabling the recruitment of autophagy receptors and induction of mitophagy. The sequence is that of Protein pelota homolog (PELO) from Bos taurus (Bovine).